A 358-amino-acid polypeptide reads, in one-letter code: Peptide chain release factor 1 (358 aa).

At Gln-233 the chain carries N5-methylglutamine.

Belongs to the prokaryotic/mitochondrial release factor family. In terms of processing, methylated by PrmC. Methylation increases the termination efficiency of RF1.

The protein localises to the cytoplasm. Peptide chain release factor 1 directs the termination of translation in response to the peptide chain termination codons UAG and UAA. This chain is Peptide chain release factor 1, found in Macrococcus caseolyticus (strain JCSC5402) (Macrococcoides caseolyticum).